A 172-amino-acid chain; its full sequence is MVTLASHLDACPDAAIWGSSKTENLGVEKIIVNVISNSNIRYVLVCGTESRGHLAGHSLLAIHANGIDEQGRITGSQGAIPFIENISGTAVERFQQQVTVLNRIGLNDPEEIRRIVEDYRDKGEAYPEEPMLVCAPKKRQTSFAVPTSGDVIISGEFVMDSKAGIIYTAESL.

It belongs to the MtrA family. May be part of a complex composed of 3 subunits; MtxA, MtxH and MtxX.

This chain is Putative methyltransferase Mtx subunit A (mtxA), found in Methanosarcina mazei (strain ATCC BAA-159 / DSM 3647 / Goe1 / Go1 / JCM 11833 / OCM 88) (Methanosarcina frisia).